We begin with the raw amino-acid sequence, 71 residues long: Conotoxin LvVIIB (71 aa).

A signal peptide spans 1 to 17; it reads VLIIAVLFLAASELVTA. Residues 18–42 constitute a propeptide that is removed on maturation; it reads DYTRDEWQYRAASLRDAMRNFRDTR. 3 cysteine pairs are disulfide-bonded: Cys43-Cys57, Cys50-Cys62, and Cys56-Cys69.

Belongs to the conotoxin O1 superfamily. In terms of tissue distribution, expressed by the venom duct.

It is found in the secreted. This Conus lividus (Livid cone) protein is Conotoxin LvVIIB.